Reading from the N-terminus, the 759-residue chain is MTPSLARQIESPVRRLRLRVRGAVQGVGFRPFAYRLARAMRLSGFVLNDSAGVLIEIEGRDANHFPEAVRTQAPPLARIDSIDVLELVPAGGERFEILESLGGRSATRIGADAATCDGCRRELTDPASRFFGYPFVNCTHCGPRFTITRALPYDRAHTSMASFPMCRTCAADYVDPENRRFHAEPVACPNCGPRLSHPIKEISARLEGGAIVALKGVGGFHLLCDARNDGAIGLLRLRKAGDQKPFAVMVRDIEAARQLARPNEAEEALLISPARPIVLVAARAGELSGLIAPGLTRVGLMLAYAPVHHLLLDELSRSSPHCHAALVATSANPGGEPLVADNDDAGRRLVAIADLVVTHDRDIVVRADDSVMQVIDGAPAFIRRARGFVPEPVDLGADGPSVIATGADLKNTICVTRGREAFLSQHIGGLDNAEAIRFQREVIAHLCSILDVKPEFAACDLHPDFRSVRTAEGLNLPIVPVQHHLAHVAAVVADDRLSGPVLGLALDGHGFGTDGTSWGGEIVVIDHHRWQRAGSLMPLPLPSGDRAAREPWRMGVAALQAAGRIDLAPQLWPGHSGVTQLTAMFSGSMPTPVTSSLGRLFDAAAAIAGVRLVQDYEGQAAMEFEALVRAPRCLAGGYSIGDGTLDFRPLILHLAEQGRPCGADAADVFHGTLIAGLADWAARGAAARGTRQVALGGGCMMNRVLAAGLARALRERGLEPSLPRLAPANDGGIALGQPAYARQVIMNEHASIEENRTCA.

The Acylphosphatase-like domain maps to 15–99; sequence RLRLRVRGAV…AGGERFEILE (85 aa). C4-type zinc fingers lie at residues 116 to 141 and 166 to 191; these read CDGC…CTHC and CRTC…CPNC. One can recognise a YrdC-like domain in the interval 196 to 387; sequence SHPIKEISAR…APAFIRRARG (192 aa).

This sequence belongs to the carbamoyltransferase HypF family.

It carries out the reaction C-terminal L-cysteinyl-[HypE protein] + carbamoyl phosphate + ATP + H2O = C-terminal S-carboxamide-L-cysteinyl-[HypE protein] + AMP + phosphate + diphosphate + H(+). It participates in protein modification; [NiFe] hydrogenase maturation. Functionally, involved in the maturation of [NiFe] hydrogenases. Along with HypE, it catalyzes the synthesis of the CN ligands of the active site iron of [NiFe]-hydrogenases. HypF functions as a carbamoyl transferase using carbamoylphosphate as a substrate and transferring the carboxamido moiety in an ATP-dependent reaction to the thiolate of the C-terminal cysteine of HypE yielding a protein-S-carboxamide. The chain is Carbamoyltransferase HypF (hypF) from Rhizobium leguminosarum bv. viciae.